Here is a 447-residue protein sequence, read N- to C-terminus: Na(+)/H(+) antiporter NhaA 2 (447 aa).

Transmembrane regions (helical) follow at residues 30-50 (FIHI…LAVL), 81-101 (LHKW…ALEL), 117-137 (LLSI…YLLL), 146-166 (GWGT…ALLG), 175-195 (IFML…VAIG), 199-219 (AVDW…RAMA), 220-240 (FLGV…WLVI), 315-335 (LLHP…NAGV), 350-370 (VFVG…WIAV), 383-403 (WGMV…ALFI), and 415-435 (AAKL…FLCL).

This sequence belongs to the NhaA Na(+)/H(+) (TC 2.A.33) antiporter family.

Its subcellular location is the cell inner membrane. It catalyses the reaction Na(+)(in) + 2 H(+)(out) = Na(+)(out) + 2 H(+)(in). Na(+)/H(+) antiporter that extrudes sodium in exchange for external protons. The sequence is that of Na(+)/H(+) antiporter NhaA 2 from Vibrio vulnificus (strain CMCP6).